A 77-amino-acid polypeptide reads, in one-letter code: Translation initiation factor IF-1, chloroplastic (77 aa).

The region spanning 1–72 is the S1-like domain; the sequence is MRKQNLIEME…TKGRITYRLR (72 aa).

It belongs to the IF-1 family. Component of the 30S ribosomal translation pre-initiation complex which assembles on the 30S ribosome in the order IF-2 and IF-3, IF-1 and N-formylmethionyl-tRNA(fMet); mRNA recruitment can occur at any time during PIC assembly.

It is found in the plastid. The protein resides in the chloroplast. Its function is as follows. One of the essential components for the initiation of protein synthesis. Stabilizes the binding of IF-2 and IF-3 on the 30S subunit to which N-formylmethionyl-tRNA(fMet) subsequently binds. Helps modulate mRNA selection, yielding the 30S pre-initiation complex (PIC). Upon addition of the 50S ribosomal subunit IF-1, IF-2 and IF-3 are released leaving the mature 70S translation initiation complex. The chain is Translation initiation factor IF-1, chloroplastic from Staurastrum punctulatum (Green alga).